A 208-amino-acid chain; its full sequence is UPF0637 protein lp_2332 (208 aa).

Belongs to the UPF0637 family.

This is UPF0637 protein lp_2332 from Lactiplantibacillus plantarum (strain ATCC BAA-793 / NCIMB 8826 / WCFS1) (Lactobacillus plantarum).